The following is a 48-amino-acid chain: Cathepsin B (48 aa).

It belongs to the peptidase C1 family. In terms of assembly, dimer of a heavy chain and a light chain cross-linked by a disulfide bond.

The protein localises to the lysosome. The enzyme catalyses Hydrolysis of proteins with broad specificity for peptide bonds. Preferentially cleaves -Arg-Arg-|-Xaa bonds in small molecule substrates (thus differing from cathepsin L). In addition to being an endopeptidase, shows peptidyl-dipeptidase activity, liberating C-terminal dipeptides.. Thiol protease which is believed to participate in intracellular degradation and turnover of proteins. Has also been implicated in tumor invasion and metastasis. The polypeptide is Cathepsin B (CTSB) (Coturnix japonica (Japanese quail)).